Consider the following 256-residue polypeptide: Non-homologous end joining protein Ku 2 (256 aa).

The 172-residue stretch at 13–184 (FADTDVAVKL…SLELQESPVS (172 aa)) folds into the Ku domain.

It belongs to the prokaryotic Ku family. As to quaternary structure, homodimer. Interacts with LigD.

In terms of biological role, with LigD forms a non-homologous end joining (NHEJ) DNA repair enzyme, which repairs dsDNA breaks with reduced fidelity. Binds linear dsDNA with 5'- and 3'- overhangs but not closed circular dsDNA nor ssDNA. Recruits and stimulates the ligase activity of LigD. This is Non-homologous end joining protein Ku 2 from Geotalea uraniireducens (strain Rf4) (Geobacter uraniireducens).